Consider the following 523-residue polypeptide: NAD(P)H-quinone oxidoreductase subunit 2 (523 aa).

Helical transmembrane passes span 29–49 (AVAPEGAVLLAMLATLLVDLA), 57–77 (WVPPICYAGLGTALLLLALQW), 94–114 (LAIAFRAVVALSTLLSLMISW), 128–148 (AGILLAATLGGMLLCGATDLV), 182–202 (LLVGSAAAAVFLYGSSLLYGL), 223–243 (AALALVFVLATVAFKIAAVPF), 255–275 (PTPVVAFLSVGSKAAGFALAL), 291–311 (LLFTVLAVLSMTLGNVVALAQ), 317–337 (MLAYSSIGQAGFVMIGLVCGT), 345–365 (VLYTAAYLFMNLGAFACIILF), 389–409 (LGLSLCLLSLGGIPPMLGFFG), 424–444 (VLVVVGLITSVISIYYYIGVI), and 477–497 (VALVTCVVVTAVGGILSNPLF).

This sequence belongs to the complex I subunit 2 family. In terms of assembly, NDH-1 can be composed of about 15 different subunits; different subcomplexes with different compositions have been identified which probably have different functions.

The protein resides in the cellular thylakoid membrane. It carries out the reaction a plastoquinone + NADH + (n+1) H(+)(in) = a plastoquinol + NAD(+) + n H(+)(out). It catalyses the reaction a plastoquinone + NADPH + (n+1) H(+)(in) = a plastoquinol + NADP(+) + n H(+)(out). Functionally, NDH-1 shuttles electrons from an unknown electron donor, via FMN and iron-sulfur (Fe-S) centers, to quinones in the respiratory and/or the photosynthetic chain. The immediate electron acceptor for the enzyme in this species is believed to be plastoquinone. Couples the redox reaction to proton translocation, and thus conserves the redox energy in a proton gradient. Cyanobacterial NDH-1 also plays a role in inorganic carbon-concentration. This is NAD(P)H-quinone oxidoreductase subunit 2 from Synechococcus sp. (strain WH7803).